A 160-amino-acid chain; its full sequence is Deoxyuridine 5'-triphosphate nucleotidohydrolase (160 aa).

Substrate contacts are provided by residues 72 to 74, Asn85, and 89 to 91; these read RSG and TID.

Belongs to the dUTPase family. It depends on Mg(2+) as a cofactor.

The enzyme catalyses dUTP + H2O = dUMP + diphosphate + H(+). The protein operates within pyrimidine metabolism; dUMP biosynthesis; dUMP from dCTP (dUTP route): step 2/2. In terms of biological role, this enzyme is involved in nucleotide metabolism: it produces dUMP, the immediate precursor of thymidine nucleotides and it decreases the intracellular concentration of dUTP so that uracil cannot be incorporated into DNA. The polypeptide is Deoxyuridine 5'-triphosphate nucleotidohydrolase (Methylocella silvestris (strain DSM 15510 / CIP 108128 / LMG 27833 / NCIMB 13906 / BL2)).